The primary structure comprises 517 residues: GMP synthase [glutamine-hydrolyzing] (517 aa).

The 191-residue stretch at Arg-9–Leu-199 folds into the Glutamine amidotransferase type-1 domain. The active-site Nucleophile is Cys-86. Residues His-173 and Glu-175 contribute to the active site. Residues Trp-200–Arg-392 enclose the GMPS ATP-PPase domain. Ser-227–Ser-233 serves as a coordination point for ATP.

As to quaternary structure, homodimer.

The enzyme catalyses XMP + L-glutamine + ATP + H2O = GMP + L-glutamate + AMP + diphosphate + 2 H(+). It participates in purine metabolism; GMP biosynthesis; GMP from XMP (L-Gln route): step 1/1. Functionally, catalyzes the synthesis of GMP from XMP. The polypeptide is GMP synthase [glutamine-hydrolyzing] (Aliivibrio fischeri (strain ATCC 700601 / ES114) (Vibrio fischeri)).